The chain runs to 338 residues: MNLNRFKRYPLTFGPSPITPLKRLSEHLGGKVELYAKREDCNSGLAFGGNKTRKLEYLIPEALEQGCDTLVSIGGIQSNQTRQVAAVAAHLGMKCVLVQENWVNYSDAVYDRVGNIEMSRIMGADVRLDAAGFDIGIRPSWEKAMNDVVERGGKPFPIPAGCSEHPYGGLGFVGFAEEVREQEKQLGFKFDYIVVCSVTGSTQAGMVVGFAADGRSKNVIGIDASAKPEKTKAQILRIARHTAELVELGREITEDDVVLDTPFAYPEYGLPNEGTLEAIRLCGSLEGVLTDPVYEGKSMHGMIEMVRRGEFPEGSKVLYAHLGGAPALNAYSFLFRNG.

An N6-(pyridoxal phosphate)lysine modification is found at lysine 51. Residue serine 78 is the Nucleophile of the active site.

It belongs to the ACC deaminase/D-cysteine desulfhydrase family. In terms of assembly, homotrimer. The cofactor is pyridoxal 5'-phosphate.

The enzyme catalyses 1-aminocyclopropane-1-carboxylate + H2O = 2-oxobutanoate + NH4(+). Functionally, catalyzes a cyclopropane ring-opening reaction, the irreversible conversion of 1-aminocyclopropane-1-carboxylate (ACC) to ammonia and alpha-ketobutyrate. Allows growth on ACC as a nitrogen source. This is 1-aminocyclopropane-1-carboxylate deaminase from Pseudomonas fluorescens.